Consider the following 256-residue polypeptide: Small ribosomal subunit protein uS2 (256 aa).

This sequence belongs to the universal ribosomal protein uS2 family.

In Streptococcus equi subsp. equi (strain 4047), this protein is Small ribosomal subunit protein uS2.